Consider the following 523-residue polypeptide: Cryptochrome DASH (523 aa).

In terms of domain architecture, Photolyase/cryptochrome alpha/beta spans 6-142 (RVIICLLRND…KYQTFWGSTL (137 aa)). Disordered regions lie at residues 174–211 (RPTF…TDPR) and 486–523 (KPAG…NKDV). The span at 496 to 510 (RRGKGPSHTPKQHKN) shows a compositional bias: basic residues.

This sequence belongs to the DNA photolyase class-1 family. It depends on FAD as a cofactor. (6R)-5,10-methylene-5,6,7,8-tetrahydrofolate serves as cofactor.

Its function is as follows. May have a photoreceptor function. Has weak cyclobutyl pyrimidine photolyase activity when expressed in E.coli and when tested in vitro. This Xenopus laevis (African clawed frog) protein is Cryptochrome DASH (cry-dash).